The sequence spans 396 residues: Cysteine protease ATG4A (396 aa).

Cysteine 77 (nucleophile) is an active-site residue. Active-site residues include aspartate 276 and histidine 278. The LIR motif lies at phenylalanine 390–leucine 393.

Belongs to the peptidase C54 family. As to quaternary structure, interacts with ATG9A; the interaction is direct.

Its subcellular location is the cytoplasm. It catalyses the reaction [protein]-C-terminal L-amino acid-glycyl-phosphatidylethanolamide + H2O = [protein]-C-terminal L-amino acid-glycine + a 1,2-diacyl-sn-glycero-3-phosphoethanolamine. Inhibited by N-ethylmaleimide. Redox-regulated during autophagy since reducing conditions activate ATG4A whereas an oxidizing environment such as the presence of H(2)O(2) inhibits its activity. In terms of biological role, cysteine protease that plays a key role in autophagy by mediating both proteolytic activation and delipidation of ATG8 family proteins. The protease activity is required for proteolytic activation of ATG8 family proteins: cleaves the C-terminal amino acid of ATG8 proteins to reveal a C-terminal glycine. Exposure of the glycine at the C-terminus is essential for ATG8 proteins conjugation to phosphatidylethanolamine (PE) and insertion to membranes, which is necessary for autophagy. Preferred substrate is GABARAPL2 followed by MAP1LC3A and GABARAP. Protease activity is also required to counteract formation of high-molecular weight conjugates of ATG8 proteins (ATG8ylation): acts as a deubiquitinating-like enzyme that removes ATG8 conjugated to other proteins, such as ATG3. In addition to the protease activity, also mediates delipidation of ATG8 family proteins. Catalyzes delipidation of PE-conjugated forms of ATG8 proteins during macroautophagy. Compared to ATG4B, the major protein for proteolytic activation of ATG8 proteins, shows weaker ability to cleave the C-terminal amino acid of ATG8 proteins, while it displays stronger delipidation activity. Involved in phagophore growth during mitophagy independently of its protease activity and of ATG8 proteins: acts by regulating ATG9A trafficking to mitochondria and promoting phagophore-endoplasmic reticulum contacts during the lipid transfer phase of mitophagy. This chain is Cysteine protease ATG4A, found in Mus musculus (Mouse).